The primary structure comprises 352 residues: S-adenosylmethionine:tRNA ribosyltransferase-isomerase (352 aa).

It belongs to the QueA family. Monomer.

It localises to the cytoplasm. It carries out the reaction 7-aminomethyl-7-carbaguanosine(34) in tRNA + S-adenosyl-L-methionine = epoxyqueuosine(34) in tRNA + adenine + L-methionine + 2 H(+). Its pathway is tRNA modification; tRNA-queuosine biosynthesis. Functionally, transfers and isomerizes the ribose moiety from AdoMet to the 7-aminomethyl group of 7-deazaguanine (preQ1-tRNA) to give epoxyqueuosine (oQ-tRNA). This Syntrophomonas wolfei subsp. wolfei (strain DSM 2245B / Goettingen) protein is S-adenosylmethionine:tRNA ribosyltransferase-isomerase.